The primary structure comprises 308 residues: MESAKSAAALVEPCQTNSARRLTEDDSLRVSVLSEALPYIQRFSGRRIVIKYGGAAMAHANLQEAVFRDLALLVSVGVEPVVVHGGGPEINQWLERLEIPAKFRDGLRVTDADTMDVVEMVLVGRVNKQIVNGLNQLGAKAVGLSGSDGSLVEARPWGDGSHGLVGDVARVNTDVLEPILAKGYVPVISSVAATVEGCSHNINADTVAGEIAAALEAEKLILLTDTPGILLDRDDPSSLVHQLRLSEARQLIAEGVVAGGMTPKTECCIRALAQGVGAAHIIDGRVPHALLLEVFTDAGIGTMVVGRS.

Substrate-binding positions include 86-87 (GG), arginine 108, and asparagine 201.

The protein belongs to the acetylglutamate kinase family. ArgB subfamily.

Its subcellular location is the cytoplasm. The enzyme catalyses N-acetyl-L-glutamate + ATP = N-acetyl-L-glutamyl 5-phosphate + ADP. It participates in amino-acid biosynthesis; L-arginine biosynthesis; N(2)-acetyl-L-ornithine from L-glutamate: step 2/4. Its function is as follows. Catalyzes the ATP-dependent phosphorylation of N-acetyl-L-glutamate. This is Acetylglutamate kinase from Prochlorococcus marinus (strain MIT 9303).